A 111-amino-acid chain; its full sequence is Nucleoid-associated protein VF_1686 (111 aa).

Disordered stretches follow at residues 1–23 (MFGGKGGMGNLMKQAQQMQDRMQ) and 89–111 (TQKEKMASVTGGMQMPPGFKMPF).

It belongs to the YbaB/EbfC family. As to quaternary structure, homodimer.

It is found in the cytoplasm. The protein localises to the nucleoid. Binds to DNA and alters its conformation. May be involved in regulation of gene expression, nucleoid organization and DNA protection. The chain is Nucleoid-associated protein VF_1686 from Aliivibrio fischeri (strain ATCC 700601 / ES114) (Vibrio fischeri).